Reading from the N-terminus, the 482-residue chain is Glutamyl-tRNA(Gln) amidotransferase subunit A (482 aa).

Residues K75 and S150 each act as charge relay system in the active site. Residue S174 is the Acyl-ester intermediate of the active site.

The protein belongs to the amidase family. GatA subfamily. Heterotrimer of A, B and C subunits.

It carries out the reaction L-glutamyl-tRNA(Gln) + L-glutamine + ATP + H2O = L-glutaminyl-tRNA(Gln) + L-glutamate + ADP + phosphate + H(+). In terms of biological role, allows the formation of correctly charged Gln-tRNA(Gln) through the transamidation of misacylated Glu-tRNA(Gln) in organisms which lack glutaminyl-tRNA synthetase. The reaction takes place in the presence of glutamine and ATP through an activated gamma-phospho-Glu-tRNA(Gln). In Cyanothece sp. (strain PCC 7425 / ATCC 29141), this protein is Glutamyl-tRNA(Gln) amidotransferase subunit A.